Here is a 489-residue protein sequence, read N- to C-terminus: CUGBP Elav-like family member 1-B (489 aa).

3 RRM domains span residues 16 to 99 (IKMF…PADS), 108 to 188 (RKLF…FADT), and 404 to 482 (ANLF…LKRS).

It belongs to the CELF/BRUNOL family. Oligomer. Oligomerization is required for RNA-binding and EDEN-dependent deadenylation. Post-translationally, phosphorylated during oocyte maturation and dephosphorylated following egg activation. Dephosphorylation is calcium dependent and correlates with the increase in the activity of EDEN-dependent deadenylation.

The protein localises to the nucleus. Its subcellular location is the cytoplasm. In terms of biological role, RNA-binding protein implicated in the regulation of several post-transcriptional events. May be involved in pre-mRNA alternative splicing, mRNA translation activation and stability. Mediates the rapid and sequence-specific cytoplasmic deadenylation of EDEN-containing maternal mRNAs following fertilization. Binds to AU-rich sequences (AREs) of jun mRNA. Binds to the embryonic deadenylation element (EDEN) motif localized in the 3'-UTR of maternal mRNAs. Binds to RNA containing several repeats of the consensus sequence 5'-UGU-3'. EDEN-dependent deadenylation is enhanced by the presence of an additional cis element composed of three AUU repeats. The protein is CUGBP Elav-like family member 1-B (cugbp1-b) of Xenopus laevis (African clawed frog).